Here is a 501-residue protein sequence, read N- to C-terminus: Growth/differentiation factor 5 (501 aa).

Positions 1–27 are cleaved as a signal peptide; that stretch reads MRLPKLLTFLLWYLAWLDLEFICTVLG. Positions 28–381 are excised as a propeptide; the sequence is APDLGQRPQG…YLFSQRRKRR (354 aa). Residues 29 to 169 form a disordered region; the sequence is PDLGQRPQGT…EPFRPPPITP (141 aa). Positions 99-111 are enriched in pro residues; the sequence is PRPGGPEPKPGHP. The span at 148 to 162 shows a compositional bias: basic and acidic residues; sequence KAREPGPPREPKEPF. Asparagine 189 is a glycosylation site (N-linked (GlcNAc...) asparagine). The disordered stretch occupies residues 246–265; the sequence is PSDTAKPAAPGGGRAAQLKL. 3 disulfide bridges follow: cysteine 400–cysteine 466, cysteine 429–cysteine 498, and cysteine 433–cysteine 500.

Belongs to the TGF-beta family. As to quaternary structure, homodimer; disulfide-linked. Interacts with serine proteases, HTRA1 and HTRA3. Following LPS binding, may form a complex with CXCR4, HSP90AA1 and HSPA8. Interacts with high affinity with NOG; inhibits chondrogenesis. Interacts with high affinity with BMPR1B and lower affinity with BMPR1A; positively regulates chondrocyte differentiation and induces SMAD dependent signaling. Interacts with FBN1 (via N-terminal domain) and FBN2. Interacts with TGFBR3. Predominantly expressed in long bones during embryonic development. Expressed in monocytes (at protein level).

Its subcellular location is the secreted. The protein localises to the cell membrane. Growth factor involved in bone and cartilage formation. During cartilage development regulates differentiation of chondrogenic tissue through two pathways. Firstly, positively regulates differentiation of chondrogenic tissue through its binding of high affinity with BMPR1B and of less affinity with BMPR1A, leading to induction of SMAD1-SMAD5-SMAD8 complex phosphorylation and then SMAD protein signaling transduction. Secondly, negatively regulates chondrogenic differentiation through its interaction with NOG. Required to prevent excessive muscle loss upon denervation. This function requires SMAD4 and is mediated by phosphorylated SMAD1/5/8. Binds bacterial lipopolysaccharide (LPS) and mediates LPS-induced inflammatory response, including TNF secretion by monocytes. This Homo sapiens (Human) protein is Growth/differentiation factor 5 (GDF5).